Here is a 197-residue protein sequence, read N- to C-terminus: Nucleoid occlusion factor SlmA (197 aa).

The HTH tetR-type domain maps to 7-67; sequence INRREHILQC…GLIEFIEESL (61 aa). Residues 30–49 constitute a DNA-binding region (H-T-H motif); sequence TTAKLAAEVGVSEAALYRHF. Positions 109-136 form a coiled coil; it reads DALLGENERLRSRISQLFSKIETHLKQI.

This sequence belongs to the nucleoid occlusion factor SlmA family. As to quaternary structure, homodimer. Interacts with FtsZ.

The protein localises to the cytoplasm. Its subcellular location is the nucleoid. Its function is as follows. Required for nucleoid occlusion (NO) phenomenon, which prevents Z-ring formation and cell division over the nucleoid. Acts as a DNA-associated cell division inhibitor that binds simultaneously chromosomal DNA and FtsZ, and disrupts the assembly of FtsZ polymers. SlmA-DNA-binding sequences (SBS) are dispersed on non-Ter regions of the chromosome, preventing FtsZ polymerization at these regions. This is Nucleoid occlusion factor SlmA from Shewanella pealeana (strain ATCC 700345 / ANG-SQ1).